The primary structure comprises 75 residues: Bacteriocin lactacin-F subunit LafA (75 aa).

The propeptide occupies methionine 1–glycine 18.

It belongs to the bacteriocin class IIB family. In terms of assembly, this bacteriocin depends upon the complementation of two peptides for activity: LafA and LafX. Associated with a 180 kDa bacteriocin complex.

In terms of biological role, heat stable bacteriocin active against Enterococcus faecalis and other Lactobacilli. The chain is Bacteriocin lactacin-F subunit LafA (lafA) from Lactobacillus johnsonii (strain CNCM I-12250 / La1 / NCC 533).